The following is a 218-amino-acid chain: Ribose-5-phosphate isomerase A (218 aa).

Residues Thr28–Thr31, Asp81–Asp84, and Lys94–Gly97 each bind substrate. The active-site Proton acceptor is the Glu103. Lys121 provides a ligand contact to substrate.

The protein belongs to the ribose 5-phosphate isomerase family. In terms of assembly, homodimer.

It catalyses the reaction aldehydo-D-ribose 5-phosphate = D-ribulose 5-phosphate. It participates in carbohydrate degradation; pentose phosphate pathway; D-ribose 5-phosphate from D-ribulose 5-phosphate (non-oxidative stage): step 1/1. In terms of biological role, catalyzes the reversible conversion of ribose-5-phosphate to ribulose 5-phosphate. The sequence is that of Ribose-5-phosphate isomerase A from Shewanella woodyi (strain ATCC 51908 / MS32).